The chain runs to 427 residues: Trigger factor (427 aa).

Residues 163–248 (GDTVILDFEG…LHEIKTKEVP (86 aa)) form the PPIase FKBP-type domain.

This sequence belongs to the FKBP-type PPIase family. Tig subfamily.

Its subcellular location is the cytoplasm. The enzyme catalyses [protein]-peptidylproline (omega=180) = [protein]-peptidylproline (omega=0). In terms of biological role, involved in protein export. Acts as a chaperone by maintaining the newly synthesized protein in an open conformation. Functions as a peptidyl-prolyl cis-trans isomerase. The polypeptide is Trigger factor (Listeria innocua serovar 6a (strain ATCC BAA-680 / CLIP 11262)).